The sequence spans 809 residues: Plasminogen (809 aa).

A signal peptide spans 1 to 19 (MDHKEVVLLLLLFLKSGLG). In terms of domain architecture, PAN spans 20-98 (DSLDDYVNTQ…RDVVLFEKRI (79 aa)). Intrachain disulfides connect Cys-49/Cys-73, Cys-53/Cys-61, Cys-103/Cys-181, Cys-124/Cys-164, Cys-152/Cys-176, Cys-185/Cys-262, Cys-188/Cys-316, Cys-206/Cys-245, Cys-234/Cys-257, Cys-275/Cys-352, Cys-296/Cys-335, Cys-324/Cys-347, Cys-377/Cys-454, Cys-398/Cys-437, Cys-426/Cys-449, Cys-480/Cys-559, Cys-501/Cys-542, Cys-530/Cys-554, Cys-566/Cys-684, Cys-576/Cys-584, Cys-606/Cys-622, Cys-698/Cys-765, Cys-728/Cys-744, and Cys-755/Cys-783. Kringle domains follow at residues 103–181 (CKTG…IPEC) and 185–262 (CMHC…IPRC). The O-linked (GalNAc...) threonine glycan is linked to Thr-268. Kringle domains lie at 275–352 (CLKG…IPSC), 377–454 (CYRG…LKKC), and 480–559 (CMFG…VPQC). A glycan (N-linked (GlcNAc...) asparagine) is linked at Asn-308. A Peptidase S1 domain is found at 580–807 (VVGGCVSIPH…FVTWIEEIMR (228 aa)). Position 596 is a phosphoserine (Ser-596). Residues His-621 and Asp-664 each act as charge relay system in the active site. The active-site Charge relay system is the Ser-759.

Belongs to the peptidase S1 family. Plasminogen subfamily. Interacts with CSPG4 and AMOT. Interacts (via the Kringle domains) with HRG; the interaction tethers PLG to the cell surface and enhances its activation. Interacts (via Kringle 4 domain) with ADA; the interaction stimulates PLG activation when in complex with DPP4. Angiostatin: Interacts with ATP5F1A; the interaction inhibits most of the angiogenic effects of angiostatin. Post-translationally, N-linked glycan contains N-acetyllactosamine, sialic acid and is core fucosylated. O-linked glycans consist of Gal-GalNAc disaccharide which is modified with up to 2 sialic acid residues (microheterogeneity). In the presence of the inhibitor, the activation involves only cleavage after Arg-579, yielding two chains held together by two disulfide bonds. In the absence of the inhibitor, the activation involves additionally the removal of the activation peptide.

Its subcellular location is the secreted. The catalysed reaction is Preferential cleavage: Lys-|-Xaa &gt; Arg-|-Xaa, higher selectivity than trypsin. Converts fibrin into soluble products.. Its activity is regulated as follows. Converted into plasmin by plasminogen activators, both plasminogen and its activator being bound to fibrin. Cannot be activated with streptokinase. Functionally, plasmin dissolves the fibrin of blood clots and acts as a proteolytic factor in a variety of other processes including embryonic development, tissue remodeling, tumor invasion, and inflammation. In ovulation, weakens the walls of the Graafian follicle. It activates the urokinase-type plasminogen activator, collagenases and several complement zymogens, such as C1, C4 and C5. Cleavage of fibronectin and laminin leads to cell detachment and apoptosis. Also cleaves fibrin, thrombospondin and von Willebrand factor. Its role in tissue remodeling and tumor invasion may be modulated by CSPG4. Binds to cells. The sequence is that of Plasminogen (PLG) from Sus scrofa (Pig).